The sequence spans 192 residues: MYVVFEGIDCVGKSTQISLLKEIYKDAIFTLEPGGTELGKHLREILLNKTHPISKRAELLLFLADRAQHFEEILKTNQNKLIISDRSFISGMAYAKDFENDLLFALNSFALENFFPQKIIFLKGDANLIQERLSQKELDSIEKRGIEYFLSVQDKLEKVLHFLKEKISIEILTLDAKESKEKLHQQIKEFLQ.

7 to 14 (GIDCVGKS) is a binding site for ATP.

This sequence belongs to the thymidylate kinase family.

The catalysed reaction is dTMP + ATP = dTDP + ADP. In terms of biological role, phosphorylation of dTMP to form dTDP in both de novo and salvage pathways of dTTP synthesis. The polypeptide is Thymidylate kinase (Campylobacter jejuni subsp. jejuni serotype O:6 (strain 81116 / NCTC 11828)).